Here is a 719-residue protein sequence, read N- to C-terminus: DNA ligase (719 aa).

NAD(+) is bound by residues 42–46 (DAEYD), 91–92 (SL), and Glu125. Residue Lys127 is the N6-AMP-lysine intermediate of the active site. Arg148, Glu184, Lys300, and Lys324 together coordinate NAD(+). The Zn(2+) site is built by Cys429, Cys432, Cys447, and Cys453. The region spanning 638–719 (TASSPIAEKI…WMRLIKGHNI (82 aa)) is the BRCT domain.

It belongs to the NAD-dependent DNA ligase family. LigA subfamily. Requires Mg(2+) as cofactor. It depends on Mn(2+) as a cofactor.

It catalyses the reaction NAD(+) + (deoxyribonucleotide)n-3'-hydroxyl + 5'-phospho-(deoxyribonucleotide)m = (deoxyribonucleotide)n+m + AMP + beta-nicotinamide D-nucleotide.. DNA ligase that catalyzes the formation of phosphodiester linkages between 5'-phosphoryl and 3'-hydroxyl groups in double-stranded DNA using NAD as a coenzyme and as the energy source for the reaction. It is essential for DNA replication and repair of damaged DNA. The sequence is that of DNA ligase from Bartonella tribocorum (strain CIP 105476 / IBS 506).